A 233-amino-acid polypeptide reads, in one-letter code: Nickel import system ATP-binding protein NikE (233 aa).

One can recognise an ABC transporter domain in the interval 2–228 (IELKHVTFGY…DRHPYTKELV (227 aa)). Residue 35 to 42 (GESGCGKS) coordinates ATP.

It belongs to the ABC transporter superfamily. As to quaternary structure, the complex is composed of two ATP-binding proteins (NikD and NikE), two transmembrane proteins (NikB and NikC) and a solute-binding protein (NikA).

The protein localises to the cell membrane. It carries out the reaction Ni(2+)(out) + ATP + H2O = Ni(2+)(in) + ADP + phosphate + H(+). Part of the ABC transporter complex NikABCDE (Opp2) involved in nickel import. Probably responsible for energy coupling to the transport system. This Staphylococcus aureus (strain MRSA252) protein is Nickel import system ATP-binding protein NikE.